An 80-amino-acid chain; its full sequence is Anaphase-promoting complex subunit hcn1 (80 aa).

An N-acetylmethionine modification is found at Met1. A disordered region spans residues 26 to 54 (QTLDSESTTEEALQKNEESTRLSPEKKKI). The span at 37-54 (ALQKNEESTRLSPEKKKI) shows a compositional bias: basic and acidic residues.

In terms of assembly, the APC/C is composed of at least 13 subunits: apc1, apc2, nuc2, apc4, apc5, cut9, apc8, apc10, apc11, hcn1, apc13, apc14 and apc15. Interacts directly (via N-terminus) with cut9.

In terms of biological role, component of the anaphase promoting complex/cyclosome (APC/C), a cell cycle-regulated E3 ubiquitin-protein ligase complex that controls progression through mitosis and the G1 phase of the cell cycle. The APC/C is thought to confer substrate specificity and, in the presence of ubiquitin-conjugating E2 enzymes, it catalyzes the formation of protein-ubiquitin conjugates that are subsequently degraded by the 26S proteasome. Has a role in assembling cut9 in the 20S APC/cyclosome. The polypeptide is Anaphase-promoting complex subunit hcn1 (hcn1) (Schizosaccharomyces pombe (strain 972 / ATCC 24843) (Fission yeast)).